Here is a 290-residue protein sequence, read N- to C-terminus: Coiled-coil domain-containing protein 137 (290 aa).

Disordered stretches follow at residues 1–92 (MARP…EAQV), 98–117 (LEKEAKGEEPDIAVPKFKQR), 139–181 (LSKN…EARA), and 269–290 (RQEMTPAQPPGSSFQRQGHACL). Over residues 20 to 39 (SGQPQGRRQQQAQGQQRSAS) the composition is skewed to low complexity. Positions 56-79 (KNQDEQEIPFRLREIMRSRQEMKK) are enriched in basic and acidic residues. The stretch at 66 to 89 (RLREIMRSRQEMKKTLSNKKRKKE) forms a coiled coil. Residues 154-163 (PKKEKSERKK) are compositionally biased toward basic and acidic residues. The stretch at 155-192 (KKEKSERKKAFQKRRLEKAQRKREARAVDRLEQELLKD) forms a coiled coil. The span at 164–178 (AFQKRRLEKAQRKRE) shows a compositional bias: basic residues.

The protein resides in the chromosome. This chain is Coiled-coil domain-containing protein 137 (Ccdc137), found in Mus musculus (Mouse).